Here is an 84-residue protein sequence, read N- to C-terminus: Small ribosomal subunit protein uS17 (84 aa).

It belongs to the universal ribosomal protein uS17 family. Part of the 30S ribosomal subunit.

Its function is as follows. One of the primary rRNA binding proteins, it binds specifically to the 5'-end of 16S ribosomal RNA. In Enterobacter sp. (strain 638), this protein is Small ribosomal subunit protein uS17.